Consider the following 265-residue polypeptide: Probable FAD synthase (265 aa).

Belongs to the PAPS reductase family. FAD1 subfamily.

The catalysed reaction is FMN + ATP + H(+) = FAD + diphosphate. Its pathway is cofactor biosynthesis; FAD biosynthesis; FAD from FMN: step 1/1. Functionally, adenylates FMN to FAD. This is Probable FAD synthase from Schizosaccharomyces pombe (strain 972 / ATCC 24843) (Fission yeast).